Here is a 492-residue protein sequence, read N- to C-terminus: Prostaglandin E2 receptor EP4 subtype (492 aa).

The Extracellular portion of the chain corresponds to 1 to 19 (MSIPGTNASSSQASNPLNS). Residue N7 is glycosylated (N-linked (GlcNAc...) asparagine). A helical membrane pass occupies residues 20 to 43 (PVTIPAVMFIFGVVGNLVAIVVLC). The Cytoplasmic portion of the chain corresponds to 44 to 55 (KSRKEQKETTFY). Residues 56–79 (TLVCGLAVTDLLGTLLVSPVTIAT) traverse the membrane as a helical segment. At 80 to 96 (YLKGQWPGGHALCEYST) the chain is on the extracellular side. A disulfide bond links C92 and C170. Residues 97–115 (FILLFFGLSGLSIICAMSI) traverse the membrane as a helical segment. Topologically, residues 116-135 (ERYLAINHAYFYSHYVDKRL) are cytoplasmic. Residues 136 to 160 (AGLTLFAVYASNVLFCALPSMGLGS) form a helical membrane-spanning segment. Residues 161–184 (SRLQYPATWCFIDWTTNVTAHAAF) are Extracellular-facing. A helical membrane pass occupies residues 185–211 (SYMYAGFSSFLILATVLCNVLVCGALL). Over 212–273 (RMHRQFMRRT…RSFRRIAGAE (62 aa)) the chain is Cytoplasmic. A helical transmembrane segment spans residues 274-301 (IQMVILLIATSLVVLICSIPLVVRVFVN). Topologically, residues 302–318 (QLYRPQLEPVIGKNPDL) are extracellular. Residues 319 to 338 (QAIRIASVSPILDPWIYILL) form a helical membrane-spanning segment. The Cytoplasmic portion of the chain corresponds to 339 to 492 (RKTVLSKAIE…ETLNLSEKCI (154 aa)). Basic and acidic residues predominate over residues 361–374 (RRERSGPHCSDSRR). A disordered region spans residues 361–383 (RRERSGPHCSDSRRTSSAVSGHS). Residues S380, S383, S385, and S388 each carry the phosphoserine modification.

Belongs to the G-protein coupled receptor 1 family. In terms of assembly, interacts with FEM1A. Phosphorylation mediates agonist-mediated desensitization by promoting cytoplasmic retention.

Its subcellular location is the cell membrane. Functionally, receptor for prostaglandin E2 (PGE2). The activity of this receptor is mediated by G(s) proteins that stimulate adenylate cyclase. Has a relaxing effect on smooth muscle. May play an important role in regulating renal hemodynamics, intestinal epithelial transport, adrenal aldosterone secretion, and uterine function. This Bos taurus (Bovine) protein is Prostaglandin E2 receptor EP4 subtype (PTGER4).